The chain runs to 132 residues: MSRYQCPDCQYIYDENKGEPHEGFHPNTSWNDIPKDWACPDCAVRDKVDFIFLADSPSKETQLGVNSQLANSESGISDATPTGMAVLAAELVIPLNQENKNEGCAAKTEVLDQASTPQVVRKSSTRKKMRNK.

One can recognise a Rubredoxin-like domain in the interval 1–53 (MSRYQCPDCQYIYDENKGEPHEGFHPNTSWNDIPKDWACPDCAVRDKVDFIFL). Residues cysteine 6, cysteine 9, cysteine 39, and cysteine 42 each contribute to the Fe cation site. The tract at residues 108–132 (TEVLDQASTPQVVRKSSTRKKMRNK) is disordered. Residues 113-122 (QASTPQVVRK) show a composition bias toward polar residues. A compositionally biased stretch (basic residues) spans 123–132 (SSTRKKMRNK).

It belongs to the rubredoxin family. Fe(3+) serves as cofactor.

Its subcellular location is the cytoplasm. Its pathway is hydrocarbon metabolism; alkane degradation. Functionally, not known. Probably involved in an electron transport pathway, but not required for the hydrocarbon hydroxylating system. Seems to be non-functional. The polypeptide is Rubredoxin-1 (alkF) (Ectopseudomonas oleovorans (Pseudomonas oleovorans)).